Consider the following 604-residue polypeptide: ERAD-associated E3 ubiquitin-protein ligase component HRD3B (604 aa).

Positions 1–25 (MRVSGQSIIAISLFTLSLYIHRVQA) are cleaved as a signal peptide. The interval 48 to 69 (ESSDFDEFGESEPKSEEELDPG) is disordered. N-linked (GlcNAc...) asparagine glycosylation is found at Asn-78 and Asn-105. 7 Sel1-like repeats span residues 125-160 (PHAQSVMGFVYGIGMMRETSRSKSILHHHFAAAGGN), 244-274 (VAMHKIGLFYYFGLRGLRRDHAKALYWFSKA), 279-307 (LGYLYVKGYGVDKRNYTKAREYFEMAANN), 311-344 (SGHYNLGVLYLKGTGVKKDVRHATKYFFVAANAG), 346-380 (PKAFYQLAKMFHTGVGLTKNLEMATTFYKLVAERG), 464-492 (AALLIGDAYYYGRGTERDFVRAAEAYMYA), and 498-528 (AQAMFNLGYMHEHGEGLPFDLHLAKRYYDQA). The N-linked (GlcNAc...) asparagine glycan is linked to Asn-293.

This sequence belongs to the sel-1 family.

Functionally, may be involved in the endoplasmic reticulum (ER) quality control system called ER-associated degradation (ERAD). The protein is ERAD-associated E3 ubiquitin-protein ligase component HRD3B of Arabidopsis thaliana (Mouse-ear cress).